Consider the following 372-residue polypeptide: Ribosomal RNA small subunit methyltransferase H (372 aa).

Residues 44-46 (GGH), Asp-63, Leu-97, Asp-111, and Gln-118 contribute to the S-adenosyl-L-methionine site. Residues 315-334 (RAAERLDPTAEQRRRTDRER) show a composition bias toward basic and acidic residues. A disordered region spans residues 315 to 372 (RAAERLDPTAEQRRRTDRERYRRRVRAMHQPGTGSAVRRPTPGDDGTGTDEEGEGHDS). The segment covering 361 to 372 (TGTDEEGEGHDS) has biased composition (acidic residues).

Belongs to the methyltransferase superfamily. RsmH family.

It localises to the cytoplasm. It catalyses the reaction cytidine(1402) in 16S rRNA + S-adenosyl-L-methionine = N(4)-methylcytidine(1402) in 16S rRNA + S-adenosyl-L-homocysteine + H(+). In terms of biological role, specifically methylates the N4 position of cytidine in position 1402 (C1402) of 16S rRNA. The polypeptide is Ribosomal RNA small subunit methyltransferase H (Salinispora arenicola (strain CNS-205)).